We begin with the raw amino-acid sequence, 306 residues long: uncharacterized protein (306 aa).

Positions 287-306 (DEEGKSEDAKRQEEEKKKSS) are disordered.

Belongs to the aldo/keto reductase family.

Its subcellular location is the cytoplasm. The protein localises to the nucleus. This is an uncharacterized protein from Schizosaccharomyces pombe (strain 972 / ATCC 24843) (Fission yeast).